A 275-amino-acid chain; its full sequence is MNQDKRAFMFISPHFDDVILSCASTLMELMNQGHTCKVLTVFGGCPSVRFQPGEIARQYAAEDLGLFEDEIEGDHLSILVARRLQEDQQAFRHLPGVQVEVLSFPDAIYRENKGQPYYRTEADLFGIPDKQDEDIFLPKIETYLQSCDLARKYTWVFPAISKHVDHRLLTKAGLRLMSQGYPVLFYSEFPYWQQHNEFLQDGWRQLELRNSVYTPVKRAAVLEYKTQLLGLFGEEAETKINNGGVLSEAELFWIQETDTQAWRVFRSLSPEPLQT.

Positions 14, 17, and 166 each coordinate Zn(2+).

Belongs to the PIGL family. It depends on Zn(2+) as a cofactor.

The catalysed reaction is 2'-N-acetylparomamine + H2O = paromamine + acetate. The protein operates within antibiotic biosynthesis; butirosin biosynthesis. In terms of biological role, deacetylase involved in the biosynthesis of butirosin by mediating deacetylation of 2'-N-acetylparomamine. The sequence is that of 2'-N-acetylparomamine deacetylase (btrD) from Niallia circulans (Bacillus circulans).